The sequence spans 857 residues: Blue light receptor lreA (857 aa).

3 PAS domains span residues Ile-306–Asn-328, Leu-479–Asp-542, and Leu-608–Asp-642. Residues Cys-811–Cys-836 form a GATA-type zinc finger.

Transcription factor that acts as a blue light sensor. Plays crucial roles in fungal growth and asexual development. Involved in conidiophore formation, sclerotium production, and conidial stress tolerance. Promotes conidiation by inducing the expression of brlA and abaA. Positively regulates the fungal pathogenicity towards maize. In blue light conditions, inhibits aflatoxin B1 (AFB1) biosynthesis by down-regulating the expression of key genes such as aflA, aflJ, aflH, aflO and aflK. This is Blue light receptor lreA from Aspergillus flavus.